Here is a 375-residue protein sequence, read N- to C-terminus: Pulmonary surfactant-associated protein D (375 aa).

The first 20 residues, Met1 to Glu20, serve as a signal peptide directing secretion. 2 positions are modified to S-nitrosocysteine: Cys35 and Cys40. The segment at Ser45–Leu221 is disordered. Positions Gly46 to Pro222 constitute a Collagen-like domain. Over residues Arg50–Asp65 the composition is skewed to basic and acidic residues. Residues Pro66–Pro86 show a composition bias toward low complexity. Pro78 carries the 4-hydroxyproline modification. Lys87 carries the post-translational modification 5-hydroxylysine. Asn90 is a glycosylation site (N-linked (GlcNAc...) asparagine). A 4-hydroxyproline modification is found at Pro96. The residue at position 99 (Lys99) is a 5-hydroxylysine. A compositionally biased stretch (pro residues) spans Ser105–Pro114. Low complexity-rich tracts occupy residues Pro116–Gln132 and Lys138–Pro150. A 4-hydroxyproline mark is found at Pro171 and Pro177. Positions Lys204 to Lys216 are enriched in basic and acidic residues. A coiled-coil region spans residues Asp223–Glu252. Residues Val260 to Phe375 form the C-type lectin domain. Disulfide bonds link Cys281–Cys373 and Cys351–Cys365.

This sequence belongs to the SFTPD family. In terms of assembly, oligomeric complex of 4 set of homotrimers. In terms of processing, the N-terminus is blocked. Hydroxylation on proline residues within the sequence motif, GXPG, is most likely to be 4-hydroxy as this fits the requirement for 4-hydroxylation in vertebrates. Post-translationally, S-nitrosylation at Cys-35 and Cys-40 alters the quaternary structure which results in a pro-inflammatory chemoattractive signaling activity with macrophages. In terms of tissue distribution, expressed in lung, brain, pancreas and adipose tissue (mainly mature adipocytes).

The protein resides in the secreted. It localises to the extracellular space. It is found in the extracellular matrix. Its subcellular location is the surface film. In terms of biological role, contributes to the lung's defense against inhaled microorganisms, organic antigens and toxins. Interacts with compounds such as bacterial lipopolysaccharides, oligosaccharides and fatty acids and modulates leukocyte action in immune response. May participate in the extracellular reorganization or turnover of pulmonary surfactant. Binds strongly maltose residues and to a lesser extent other alpha-glucosyl moieties. The chain is Pulmonary surfactant-associated protein D (SFTPD) from Homo sapiens (Human).